We begin with the raw amino-acid sequence, 197 residues long: Peptide deformylase (197 aa).

Fe cation-binding residues include Cys-106 and His-148. Glu-149 is a catalytic residue. His-152 is a Fe cation binding site.

It belongs to the polypeptide deformylase family. It depends on Fe(2+) as a cofactor.

It catalyses the reaction N-terminal N-formyl-L-methionyl-[peptide] + H2O = N-terminal L-methionyl-[peptide] + formate. Its function is as follows. Removes the formyl group from the N-terminal Met of newly synthesized proteins. Requires at least a dipeptide for an efficient rate of reaction. N-terminal L-methionine is a prerequisite for activity but the enzyme has broad specificity at other positions. This is Peptide deformylase from Mycolicibacterium smegmatis (strain ATCC 700084 / mc(2)155) (Mycobacterium smegmatis).